The primary structure comprises 123 residues: Large ribosomal subunit protein bL12 (123 aa).

This sequence belongs to the bacterial ribosomal protein bL12 family. Homodimer. Part of the ribosomal stalk of the 50S ribosomal subunit. Forms a multimeric L10(L12)X complex, where L10 forms an elongated spine to which 2 to 4 L12 dimers bind in a sequential fashion. Binds GTP-bound translation factors.

In terms of biological role, forms part of the ribosomal stalk which helps the ribosome interact with GTP-bound translation factors. Is thus essential for accurate translation. The chain is Large ribosomal subunit protein bL12 from Borrelia turicatae (strain 91E135).